A 293-amino-acid polypeptide reads, in one-letter code: tRNA (guanine-N(7)-)-methyltransferase (293 aa).

The span at 1-31 shows a compositional bias: basic and acidic residues; the sequence is MGGDKIKKDKRQKREDYRAAMRKDDISELPR. Disordered regions lie at residues 1–33 and 68–97; these read MGGD…PRKK and IVDE…TPLR. Residues 75–85 show a composition bias toward pro residues; it reads TSPPPPPPVPE. S-adenosyl-L-methionine contacts are provided by residues Gly111, 134–135, 169–170, and Cys189; these read EI and NT. Residue Asp192 is part of the active site. Residue 267 to 269 coordinates S-adenosyl-L-methionine; sequence TEE.

It belongs to the class I-like SAM-binding methyltransferase superfamily. TrmB family. Forms a complex with TRM82.

The protein localises to the nucleus. It carries out the reaction guanosine(46) in tRNA + S-adenosyl-L-methionine = N(7)-methylguanosine(46) in tRNA + S-adenosyl-L-homocysteine. The protein operates within tRNA modification; N(7)-methylguanine-tRNA biosynthesis. Catalyzes the formation of N(7)-methylguanine at position 46 (m7G46) in tRNA. The protein is tRNA (guanine-N(7)-)-methyltransferase of Chaetomium globosum (strain ATCC 6205 / CBS 148.51 / DSM 1962 / NBRC 6347 / NRRL 1970) (Soil fungus).